The sequence spans 443 residues: GTPase Der (443 aa).

EngA-type G domains follow at residues 3–167 (PVIA…PEEK) and 176–349 (IKIA…QSIQ). GTP-binding positions include 9 to 16 (GRPNVGKS), 56 to 60 (DTGGL), 119 to 122 (NKAD), 182 to 189 (GRPNVGKS), 229 to 233 (DTAGI), and 294 to 297 (NKWD). The KH-like domain maps to 350–434 (QELTTGQLTR…PVHIKLKTDP (85 aa)).

It belongs to the TRAFAC class TrmE-Era-EngA-EngB-Septin-like GTPase superfamily. EngA (Der) GTPase family. As to quaternary structure, associates with the 50S ribosomal subunit.

Functionally, GTPase that plays an essential role in the late steps of ribosome biogenesis. This chain is GTPase Der, found in Coxiella burnetii (strain CbuK_Q154) (Coxiella burnetii (strain Q154)).